Reading from the N-terminus, the 179-residue chain is UPF0227 protein Shewmr4_1727 (179 aa).

Belongs to the UPF0227 family.

This Shewanella sp. (strain MR-4) protein is UPF0227 protein Shewmr4_1727.